The chain runs to 81 residues: Antimicrobial peptide D1 (81 aa).

The N-terminal stretch at 1 to 31 is a signal peptide; it reads MAKTVLGIHVTFLTLLFAVLLLNDVMYTPVE. 4 disulfides stabilise this stretch: Cys34-Cys81, Cys45-Cys66, Cys51-Cys75, and Cys55-Cys77.

Antimicrobial peptide probably active against fungi like B.sorokiniana, F.oxysporum, F.graminearum, F.avenaceum, B.cinerea, P.beta, P.infestans and P.debaryanum. The polypeptide is Antimicrobial peptide D1 (Stellaria media (Common chickweed)).